We begin with the raw amino-acid sequence, 371 residues long: Signal peptide peptidase-like 1 (371 aa).

Residues 1–6 (MESLWK) lie on the Lumenal side of the membrane. Residues 7–27 (LSYLLEPASLALILTAVSVAY) form a helical membrane-spanning segment. The Cytoplasmic segment spans residues 28–57 (ASASRALDHGREMERNLDFSEASITLDRSQ). The helical transmembrane segment at 58–75 (ALMIPLASSCSLLLMFYL) threads the bilayer. The Lumenal segment spans residues 76 to 80 (FSSVS). A helical membrane pass occupies residues 81-103 (HLVTAFTAVASAMALFFCLSPYV). Over 104–123 (NCVRSRLGVGDPFVSRCCSK) the chain is Cytoplasmic. A helical transmembrane segment spans residues 124 to 146 (PFTRLQGLLVAICVGTVVAWLVS). Topologically, residues 147 to 149 (GHW) are lumenal. The chain crosses the membrane as a helical span at residues 150–167 (LLNNLLGISICIAFVSHV). Residues 168 to 171 (RLPN) lie on the Cytoplasmic side of the membrane. A helical transmembrane segment spans residues 172-192 (IKICALLLVCLFVYDVFWVFF). The active site involves Asp186. The Lumenal segment spans residues 193-258 (SERFFGANVM…LAPGSSPGDY (66 aa)). A helical transmembrane segment spans residues 259–279 (MMLGLGDMAIPGMLLALVLSF). Residue Asp265 is part of the active site. Residues 280–301 (DHRKIKDMSVSQDMPPSKQRKY) lie on the Cytoplasmic side of the membrane. The chain crosses the membrane as a helical span at residues 302–322 (VWYALTGYGVGLVTALAAGIL). The Lumenal portion of the chain corresponds to 323–326 (SQSP). Residues 327-347 (QPALLYLVPSTLGPVMYMSWL) form a helical membrane-spanning segment. The PAL signature appears at 328–330 (PAL). Residues 348-371 (RNELWELWEGSRPIINDKAHLLEV) lie on the Cytoplasmic side of the membrane.

The protein belongs to the peptidase A22B family.

It localises to the endosome membrane. Its function is as follows. Intramembrane-cleaving aspartic protease (I-CLiP) that cleaves type II membrane signal peptides in the hydrophobic plane of the membrane. The chain is Signal peptide peptidase-like 1 (SPPL1) from Oryza sativa subsp. japonica (Rice).